We begin with the raw amino-acid sequence, 474 residues long: Coronin-1C (474 aa).

6 WD repeats span residues 25 to 70 (DDIR…GRID), 78 to 118 (GHTG…LTLS), 128 to 168 (GHSK…ALIN), 172 to 202 (MHSD…RVID), 215 to 249 (AHEG…ALWN), and 263 to 303 (DTSN…PYVH). The stretch at 436 to 474 (QNEAKLDEILKEIKSIKDTICNQDERISKLEQQMAKIAA) forms a coiled coil. Lys446 bears the N6-acetyllysine mark.

It belongs to the WD repeat coronin family. In terms of assembly, binds F-actin. Interacts with RCC2. Interacts preferentially with nucleotide-free and GDP-bound RAC1. Interacts with VIM (via head domain). Isoform 1 and isoform 2 appear as homotrimers, while isoform 3 seems to exist as monomers. Interacts with MICAL2; this interaction recruits MICAL2 to the actin filaments. Ubiquitous.

The protein resides in the cell membrane. Its subcellular location is the cell projection. The protein localises to the lamellipodium. It localises to the ruffle membrane. It is found in the cytoplasm. The protein resides in the cytoskeleton. Its subcellular location is the cell cortex. The protein localises to the endosome membrane. It localises to the sarcolemma. It is found in the myofibril. The protein resides in the sarcomere. Its subcellular location is the synapse. In terms of biological role, plays a role in directed cell migration by regulating the activation and subcellular location of RAC1. Increases the presence of activated RAC1 at the leading edge of migrating cells. Required for normal organization of the cytoskeleton, including the actin cytoskeleton, microtubules and the vimentin intermediate filaments. Plays a role in endoplasmic reticulum-associated endosome fission: localizes to endosome membrane tubules and promotes recruitment of TMCC1, leading to recruitment of the endoplasmic reticulum to endosome tubules for fission. Endosome membrane fission of early and late endosomes is essential to separate regions destined for lysosomal degradation from carriers to be recycled to the plasma membrane. Required for normal cell proliferation, cell migration, and normal formation of lamellipodia. Required for normal distribution of mitochondria within cells. Involved in myogenic differentiation. The sequence is that of Coronin-1C from Homo sapiens (Human).